Consider the following 509-residue polypeptide: MFS transporter fsdG (509 aa).

N8 and N26 each carry an N-linked (GlcNAc...) asparagine glycan. 4 helical membrane-spanning segments follow: residues 63 to 83, 103 to 123, 139 to 159, and 162 to 182; these read FLIH…ATTM, IALT…VTSP, IFFL…MFIA, and FLAG…IADF. N-linked (GlcNAc...) asparagine glycosylation occurs at N189. Helical transmembrane passes span 195 to 215, 222 to 242, 298 to 318, and 341 to 361; these read LFAL…GFVA, WTFR…CIFL, LIFL…FGLI, and GLSY…FNFI. The N-linked (GlcNAc...) asparagine glycan is linked to N367. Helical transmembrane passes span 380-400, 408-428, 442-462, and 474-494; these read YLPL…WYGW, WVVP…IIMP, AASV…FLPL, and GWGN…PAIF.

It belongs to the major facilitator superfamily.

The protein localises to the cell membrane. Functionally, efflux pump that might be required for efficient secretion of fusaridione A or other secondary metabolies produced by the fusaridione A gene cluster. The chain is MFS transporter fsdG from Fusarium heterosporum.